The chain runs to 345 residues: UDP-N-acetylenolpyruvoylglucosamine reductase (345 aa).

Residues 16 to 185 (VNAFAKSVVT…VSVGLRLCKK (170 aa)) enclose the FAD-binding PCMH-type domain. Residue arginine 162 is part of the active site. Serine 231 acts as the Proton donor in catalysis. Glutamate 328 is a catalytic residue.

This sequence belongs to the MurB family. Requires FAD as cofactor.

It localises to the cytoplasm. The catalysed reaction is UDP-N-acetyl-alpha-D-muramate + NADP(+) = UDP-N-acetyl-3-O-(1-carboxyvinyl)-alpha-D-glucosamine + NADPH + H(+). It functions in the pathway cell wall biogenesis; peptidoglycan biosynthesis. In terms of biological role, cell wall formation. This is UDP-N-acetylenolpyruvoylglucosamine reductase from Blochmanniella pennsylvanica (strain BPEN).